The sequence spans 859 residues: Volume-regulated anion channel subunit LRRC8D (859 aa).

Over 1-22 the chain is Cytoplasmic; that stretch reads MFTLAEVASLNDIQPTYRILKP. A helical transmembrane segment spans residues 23-48; sequence WWDVFMDYLAVVMLMVAIFAGTMQLT. Topologically, residues 49–164 are extracellular; sequence KDQVVCLPVL…YHLALPWYSK (116 aa). A disulfide bond links Cys54 and Cys355. A disordered region spans residues 110-138; sequence IPLQATHPHAESTLPNQEAKKEKRDPTGR. The span at 127–138 shows a compositional bias: basic and acidic residues; it reads EAKKEKRDPTGR. A helical transmembrane segment spans residues 165-183; sequence YFPYLALIHTIILMVSSNF. Residues 184–309 are Cytoplasmic-facing; the sequence is WFKYPKTCSK…EDSDLIYKLY (126 aa). Positions 222–252 are disordered; sequence SEENKQRITGAQTLPKHVSTSSDEGSPSAST. Polar residues predominate over residues 228-252; sequence RITGAQTLPKHVSTSSDEGSPSAST. Ser242, Ser243, and Ser247 each carry phosphoserine. A helical transmembrane segment spans residues 310 to 331; it reads VVQTLIKTAKFIFILCYTANFV. Residues 332-361 are Extracellular-facing; sequence NAISFEHVCKPKVEHLTGYEVFECTHNMAY. Residues 362 to 387 form a helical membrane-spanning segment; the sequence is MLKKLLISYISIICVYGFICLYTLFW. The Cytoplasmic portion of the chain corresponds to 388 to 859; it reads LFRIPLKEYS…DVNVPFANGI (472 aa). LRR repeat units lie at residues 515 to 535, 539 to 560, 562 to 583, 590 to 610, 613 to 633, 637 to 658, 660 to 681, 685 to 706, 708 to 729, 731 to 752, 754 to 775, 777 to 798, and 800 to 821; these read NLQE…AFSF, HLRC…VYLL, NLRE…IGLE, HLKI…ITDV, HLTK…NSLK, NVAE…IFSL, NLQE…ISFQ, RLTC…ITHV, NLES…VFSL, KLRC…IGLL, NLQH…LFKC, KLRT…ISQL, and QLTQ…LGQC.

It belongs to the LRRC8 family. As to quaternary structure, heterohexamer; oligomerizes with other LRRC8 proteins (LRRC8A, LRRC8B, LRRC8C and/or LRRC8E) to form a heterohexamer. In vivo, the subunit composition may depend primarily on expression levels, and heterooligomeric channels containing various proportions of the different LRRC8 proteins may coexist. In terms of tissue distribution, expressed in pancreatic beta cells. Also expressed in glucagon-secreting pancreatic alpha cells.

It localises to the cell membrane. The protein localises to the endoplasmic reticulum membrane. The catalysed reaction is chloride(in) = chloride(out). The enzyme catalyses iodide(out) = iodide(in). It carries out the reaction taurine(out) = taurine(in). In terms of biological role, non-essential component of the volume-regulated anion channel (VRAC, also named VSOAC channel), an anion channel required to maintain a constant cell volume in response to extracellular or intracellular osmotic changes. The VRAC channel conducts iodide better than chloride and can also conduct organic osmolytes like taurine. Plays a redundant role in the efflux of amino acids, such as aspartate, in response to osmotic stress family member (LRRC8B, LRRC8C, LRRC8D or LRRC8E); channel characteristics depend on the precise subunit composition. Also acts as a regulator of glucose-sensing in pancreatic beta cells: VRAC currents, generated in response to hypotonicity- or glucose-induced beta cell swelling, depolarize cells, thereby causing electrical excitation, leading to increase glucose sensitivity and insulin secretion. VRAC channels containing LRRC8D inhibit transport of immunoreactive cyclic dinucleotide GMP-AMP (2'-3'-cGAMP), an immune messenger produced in response to DNA virus in the cytosol. The polypeptide is Volume-regulated anion channel subunit LRRC8D (Mus musculus (Mouse)).